The sequence spans 539 residues: Phosphoenolpyruvate carboxykinase (ATP) (539 aa).

Substrate is bound by residues Arg64, Tyr206, and Lys212. ATP-binding positions include Lys212, His231, and 247 to 255; that span reads GLSGTGKTT. The Mn(2+) site is built by Lys212 and His231. Asp268 contributes to the Mn(2+) binding site. ATP is bound by residues Glu296, Arg332, 448–449, and Thr454; that span reads RI. Arg332 provides a ligand contact to substrate.

The protein belongs to the phosphoenolpyruvate carboxykinase (ATP) family. Monomer. Mn(2+) serves as cofactor.

It is found in the cytoplasm. It carries out the reaction oxaloacetate + ATP = phosphoenolpyruvate + ADP + CO2. It functions in the pathway carbohydrate biosynthesis; gluconeogenesis. In terms of biological role, involved in the gluconeogenesis. Catalyzes the conversion of oxaloacetate (OAA) to phosphoenolpyruvate (PEP) through direct phosphoryl transfer between the nucleoside triphosphate and OAA. The protein is Phosphoenolpyruvate carboxykinase (ATP) of Citrobacter koseri (strain ATCC BAA-895 / CDC 4225-83 / SGSC4696).